A 417-amino-acid chain; its full sequence is Gamma-glutamyl phosphate reductase (417 aa).

The protein belongs to the gamma-glutamyl phosphate reductase family.

The protein resides in the cytoplasm. The enzyme catalyses L-glutamate 5-semialdehyde + phosphate + NADP(+) = L-glutamyl 5-phosphate + NADPH + H(+). Its pathway is amino-acid biosynthesis; L-proline biosynthesis; L-glutamate 5-semialdehyde from L-glutamate: step 2/2. Its function is as follows. Catalyzes the NADPH-dependent reduction of L-glutamate 5-phosphate into L-glutamate 5-semialdehyde and phosphate. The product spontaneously undergoes cyclization to form 1-pyrroline-5-carboxylate. In Streptococcus agalactiae serotype III (strain NEM316), this protein is Gamma-glutamyl phosphate reductase.